The following is a 96-amino-acid chain: Toxin ParE1 (96 aa).

It belongs to the RelE toxin family. As to quaternary structure, forms a ParD1(2)-ParE1(2) heterotetramer.

Functionally, toxic component of a type II toxin-antitoxin (TA) system. Its toxic effect is neutralized by coexpression with cognate antitoxin ParD1 but no other ParD or RelB antitoxin. Low levels of wild-type toxin in the absence of antitoxin decreases the rate of cell growth, and results in death or loss of colony formation abilities and greatly elongated cells. Low levels of a mutant missing the last 4 residues leads to loss of cell division while cell elongation continues. This Caulobacter vibrioides (strain ATCC 19089 / CIP 103742 / CB 15) (Caulobacter crescentus) protein is Toxin ParE1 (parE1).